A 626-amino-acid polypeptide reads, in one-letter code: Putative L-type lectin-domain containing receptor kinase V.8 (626 aa).

A signal peptide spans 1-21; that stretch reads MPSELKVLHIVLVLLYTLSSS. A legume-lectin like region spans residues 22 to 212; the sequence is TYNSNGNWTL…SIGAFHYMLS (191 aa). Residues 22-245 lie on the Extracellular side of the membrane; it reads TYNSNGNWTL…PKKSSDRTKK (224 aa). Asn28, Asn59, Asn112, and Asn162 each carry an N-linked (GlcNAc...) asparagine glycan. Residues 246–266 traverse the membrane as a helical segment; it reads ILAVCLTLAVFAVFVASGICF. Residues 267-626 lie on the Cytoplasmic side of the membrane; that stretch reads VFYTRHKKVK…LTNSFLSHGR (360 aa). The 260-residue stretch at 303–562 folds into the Protein kinase domain; sequence FKEKQLLGKG…GLLCAHHTEL (260 aa). Residues 309–317 and Lys332 each bind ATP; that span reads LGKGGFGQV. Asp429 (proton acceptor) is an active-site residue.

This sequence in the C-terminal section; belongs to the protein kinase superfamily. Ser/Thr protein kinase family. In the N-terminal section; belongs to the leguminous lectin family.

The protein resides in the cell membrane. It catalyses the reaction L-seryl-[protein] + ATP = O-phospho-L-seryl-[protein] + ADP + H(+). The enzyme catalyses L-threonyl-[protein] + ATP = O-phospho-L-threonyl-[protein] + ADP + H(+). The protein is Putative L-type lectin-domain containing receptor kinase V.8 (LECRK58) of Arabidopsis thaliana (Mouse-ear cress).